Here is a 247-residue protein sequence, read N- to C-terminus: MKLNISYPATGCQKLIEVDDEKKLRPFYDKRISAELSADCLGDEWKGYVVRISGGNDKQGFPMKQGVLTATRVRLLLDKNHSCYRPRRTGERKRKSVRGCIVDSNLSVLSLVIIKKGEQDIPGLTDKTIPRRLGPKRASKIRKLFNLSKEDDVRQYVVRRPLPERDGKKAKSKAPKIQRLVTPVVLQRKRARMALKKKRVTKKREDHAEYTKLLAQRMKEAKERKMERKRSNSRSKGDSIRESTSKK.

The segment at Ala194–Lys247 is disordered. The segment covering Arg217–Lys247 has biased composition (basic and acidic residues).

It belongs to the eukaryotic ribosomal protein eS6 family. In terms of processing, ribosomal protein S6 is the major substrate of protein kinases in eukaryote ribosomes.

In terms of biological role, component of the 40S small ribosomal subunit. Plays an important role in controlling cell growth and proliferation through the selective translation of particular classes of mRNA. The sequence is that of Small ribosomal subunit protein eS6 (RPS6) from Aplysia californica (California sea hare).